Here is a 66-residue protein sequence, read N- to C-terminus: Omega conotoxin-CVIE (66 aa).

The first 17 residues, 1–17 (VVIVAVLLLTACQLITA), serve as a signal peptide directing secretion. The propeptide occupies 18–40 (NDSRGTQKHRALRSDTKLSMSTR). Intrachain disulfides connect Cys-41/Cys-56, Cys-48/Cys-60, and Cys-55/Cys-65. A Cysteine amide modification is found at Cys-65.

Belongs to the conotoxin O1 superfamily. Expressed by the venom duct.

Its subcellular location is the secreted. Omega-conotoxins act at presynaptic membranes, they bind and block voltage-gated calcium channels. This toxin blocks N-type calcium channels (Cav2.2/CACNA1B). It shows a higher potency when Cav2.2/CACNA1B is only expressed with the ancillary subunit CACNB3 (IC(50)=0.12 nM) than on Cav2.2/CACNA1B expressed with the ancillary subunits CACNA2D1 and CACNB3 (IC(50)=2.6 nM). The Cav2.2/CACNA1B block by this toxin is voltage-independent, whereas the recovery from toxin block is voltage-dependent. There is a low recovery at physiological membrane potential and a high recovery with hyperpolarized potential. This indicates that the toxin has a higher affinity for Cav2.2/CACNA1B in the inactivated state. It is noteworthy that ancillary subunits beta modulate recovery from this toxin block. Cav2.2/CACNA1B expressed with the ancillary subunit CACNB2a (isoform 2a) almost recover completely from this toxin block, whereas Cav2.2/CACNA1B expressed with CACNB3 exhibits relatively weak recovery. Inhibition by this toxin of excitatory synaptic transmission is reversible. In vivo, when tested on rat model of persistent pain, this toxin blocks chronic pain behavior. This is Omega conotoxin-CVIE from Conus catus (Cat cone).